A 384-amino-acid polypeptide reads, in one-letter code: Neuropeptide Y receptor type 2 (384 aa).

Residues 1–54 (MKMGPLGAEADENQTVEEMKVDQFGPGHTTLPGELAPDSEPELIDSTKLIEVQV) lie on the Extracellular side of the membrane. N-linked (GlcNAc...) asparagine glycosylation occurs at N13. Residues 55–75 (VLILAYCSIILLGVIGNSLVI) form a helical membrane-spanning segment. At 76–89 (HVVIKFKSMRTVTN) the chain is on the cytoplasmic side. A helical membrane pass occupies residues 90 to 110 (FFIANLAVADLLVNTLCLPFT). At 111-127 (LTYTLMGEWKMGPVLCH) the chain is on the extracellular side. A disulfide bond links C126 and C206. A helical transmembrane segment spans residues 128–148 (LVPYAQGLAVQVSTITLTVIA). Residues 149–168 (LDRHRCIVYHLESKISKQIS) lie on the Cytoplasmic side of the membrane. A helical transmembrane segment spans residues 169–189 (FLIIGLAWGVSALLASPLAIF). Topologically, residues 190 to 219 (REYSLIEIIPDFEIVACTEKWPGEEKGIYG) are extracellular. A helical membrane pass occupies residues 220-240 (TIYSLSSLLILYVLPLGIISF). The Cytoplasmic segment spans residues 241-271 (SYTRIWSKLKNHVSPGAAHDHYHQRRQKTTK). Residues 272 to 292 (MLVCVVVVFAVSWLPLHAFQL) form a helical membrane-spanning segment. The Extracellular portion of the chain corresponds to 293 to 307 (AVDIDSHVLDLKEYK). Residues 308 to 328 (LIFTVFHIIAMCSTFANPLLY) form a helical membrane-spanning segment. Residues 329 to 384 (GWMNSNYRKAFLSAFRCEQRLDAIHSEVSVTFKAKKHLQVTKNNGPNDSFTETTNV) are Cytoplasmic-facing. C345 is lipidated: S-palmitoyl cysteine.

The protein belongs to the G-protein coupled receptor 1 family.

It localises to the cell membrane. Receptor for neuropeptide Y and peptide YY. The chain is Neuropeptide Y receptor type 2 (NPY2R) from Bos taurus (Bovine).